Reading from the N-terminus, the 1007-residue chain is A disintegrin and metalloproteinase with thrombospondin motifs 1 (1007 aa).

A signal peptide spans 1-20 (MPCCLWAALSLLLAVVGAGA). N-linked (GlcNAc...) asparagine glycans are attached at residues Asn-130 and Asn-228. The 187-residue stretch at 184–370 (LWLELAIVAD…WSSCSKEQFH (187 aa)) folds into the Peptidase M12B domain. His-322 is a binding site for Zn(2+). A Metal-binding motif is present at residues 322–333 (HELAHLLGLTHD). Residue Glu-323 is part of the active site. Positions 326 and 332 each coordinate Zn(2+). Disulfide bonds link Cys-338–Cys-364, Cys-494–Cys-530, Cys-498–Cys-536, and Cys-509–Cys-520. The region spanning 482 to 537 (TPEWGDWEEWSACNADCGYGLRTRTRKCKYRGFVSESACEGAGSQVATCWAGSSCA) is the TSP type-1 1 domain. N-linked (GlcNAc...) asparagine glycosylation is found at Asn-561, Asn-610, Asn-626, Asn-737, Asn-777, and Asn-865. TSP type-1 domains follow at residues 833 to 899 (CEFV…NRIP) and 900 to 952 (CPVY…RRCP). 3 disulfides stabilise this stretch: Cys-912-Cys-946, Cys-916-Cys-951, and Cys-927-Cys-935.

Requires Zn(2+) as cofactor.

It localises to the secreted. Its subcellular location is the extracellular space. The protein localises to the extracellular matrix. Its function is as follows. Involved in larval molting and metamorphosis. May degrade extracellular matrix (ECM) and basement membrane (BM) during the development of organs to allow degeneration and remodeling of tissues. This chain is A disintegrin and metalloproteinase with thrombospondin motifs 1, found in Bombyx mori (Silk moth).